Consider the following 279-residue polypeptide: Acetyl-coenzyme A carboxylase carboxyl transferase subunit beta (279 aa).

Residues 23 to 279 (LWWKCEECGA…LTTLLSLMKL (257 aa)) form the CoA carboxyltransferase N-terminal domain. Positions 27, 30, 46, and 49 each coordinate Zn(2+). The C4-type zinc-finger motif lies at 27–49 (CEECGAALHKKQMEASDHTCPQC).

This sequence belongs to the AccD/PCCB family. As to quaternary structure, acetyl-CoA carboxylase is a heterohexamer composed of biotin carboxyl carrier protein (AccB), biotin carboxylase (AccC) and two subunits each of ACCase subunit alpha (AccA) and ACCase subunit beta (AccD). The cofactor is Zn(2+).

Its subcellular location is the cytoplasm. The catalysed reaction is N(6)-carboxybiotinyl-L-lysyl-[protein] + acetyl-CoA = N(6)-biotinyl-L-lysyl-[protein] + malonyl-CoA. Its pathway is lipid metabolism; malonyl-CoA biosynthesis; malonyl-CoA from acetyl-CoA: step 1/1. Its function is as follows. Component of the acetyl coenzyme A carboxylase (ACC) complex. Biotin carboxylase (BC) catalyzes the carboxylation of biotin on its carrier protein (BCCP) and then the CO(2) group is transferred by the transcarboxylase to acetyl-CoA to form malonyl-CoA. The protein is Acetyl-coenzyme A carboxylase carboxyl transferase subunit beta of Chlorobium chlorochromatii (strain CaD3).